Consider the following 450-residue polypeptide: Bifunctional protein GlmU (450 aa).

Residues 1–229 form a pyrophosphorylase region; the sequence is MRRHAIILAA…VEEIMGVNDR (229 aa). UDP-N-acetyl-alpha-D-glucosamine is bound by residues 8 to 11, lysine 22, glutamine 72, and 77 to 78; these read LAAG and GT. Residue aspartate 102 participates in Mg(2+) binding. Glycine 139, glutamate 154, and asparagine 227 together coordinate UDP-N-acetyl-alpha-D-glucosamine. Residue asparagine 227 coordinates Mg(2+). Residues 230–250 are linker; that stretch reads VMLSQAEKAMQRRTNHYHMLN. Residues 251–450 are N-acetyltransferase; it reads GVTIIDPDST…RQTTKEGYRK (200 aa). Residues arginine 332 and lysine 350 each contribute to the UDP-N-acetyl-alpha-D-glucosamine site. The Proton acceptor role is filled by histidine 362. 2 residues coordinate UDP-N-acetyl-alpha-D-glucosamine: tyrosine 365 and asparagine 376. Acetyl-CoA-binding positions include 385-386, alanine 422, and arginine 439; that span reads NY.

It in the N-terminal section; belongs to the N-acetylglucosamine-1-phosphate uridyltransferase family. This sequence in the C-terminal section; belongs to the transferase hexapeptide repeat family. In terms of assembly, homotrimer. The cofactor is Mg(2+).

Its subcellular location is the cytoplasm. It catalyses the reaction alpha-D-glucosamine 1-phosphate + acetyl-CoA = N-acetyl-alpha-D-glucosamine 1-phosphate + CoA + H(+). The enzyme catalyses N-acetyl-alpha-D-glucosamine 1-phosphate + UTP + H(+) = UDP-N-acetyl-alpha-D-glucosamine + diphosphate. It participates in nucleotide-sugar biosynthesis; UDP-N-acetyl-alpha-D-glucosamine biosynthesis; N-acetyl-alpha-D-glucosamine 1-phosphate from alpha-D-glucosamine 6-phosphate (route II): step 2/2. It functions in the pathway nucleotide-sugar biosynthesis; UDP-N-acetyl-alpha-D-glucosamine biosynthesis; UDP-N-acetyl-alpha-D-glucosamine from N-acetyl-alpha-D-glucosamine 1-phosphate: step 1/1. Its pathway is bacterial outer membrane biogenesis; LPS lipid A biosynthesis. Catalyzes the last two sequential reactions in the de novo biosynthetic pathway for UDP-N-acetylglucosamine (UDP-GlcNAc). The C-terminal domain catalyzes the transfer of acetyl group from acetyl coenzyme A to glucosamine-1-phosphate (GlcN-1-P) to produce N-acetylglucosamine-1-phosphate (GlcNAc-1-P), which is converted into UDP-GlcNAc by the transfer of uridine 5-monophosphate (from uridine 5-triphosphate), a reaction catalyzed by the N-terminal domain. This is Bifunctional protein GlmU from Staphylococcus aureus (strain Mu50 / ATCC 700699).